A 403-amino-acid chain; its full sequence is Malate dehydrogenase, chloroplastic (403 aa).

Residues 1-80 constitute a chloroplast transit peptide; the sequence is MATATSASLF…DKKPYGFKIN (80 aa). Residues 89–95 and Asp-115 each bind NAD(+); that span reads GAAGGIG. Arg-162 and Arg-168 together coordinate substrate. NAD(+) is bound by residues Asn-175 and 198–200; that span reads ISN. 2 residues coordinate substrate: Asn-200 and Arg-234. Catalysis depends on His-258, which acts as the Proton acceptor. An NAD(+)-binding site is contributed by Met-309.

It belongs to the LDH/MDH superfamily. MDH type 1 family. In terms of assembly, homodimer. Expressed in rosette leaves. Expressed in meristematic regions of roots and shoots, cotyledons, young leaves, trichomes, stamen, pollen, tapetum, gynoecium and ovules.

It localises to the plastid. Its subcellular location is the chloroplast stroma. It carries out the reaction (S)-malate + NAD(+) = oxaloacetate + NADH + H(+). Functionally, catalyzes a reversible NAD-dependent dehydrogenase reaction involved in central metabolism and redox homeostasis between organelle compartments. Plays a key role in the metabolism of dark chloroplasts and non-green plastids. Essential for embryo viability. Plays an essential role in heterotrophic metabolism in embryos, and autotrophic metabolism in photosynthetic tissues as well. This Arabidopsis thaliana (Mouse-ear cress) protein is Malate dehydrogenase, chloroplastic.